Reading from the N-terminus, the 602-residue chain is Leucine-rich repeat-containing protein 40 (602 aa).

Residues Met1–Ser26 are disordered. The span at Pro8–Gly24 shows a compositional bias: basic and acidic residues. An LRR 1 repeat occupies Ala35 to Ile58. Residue Ser71 is modified to Phosphoserine. LRR repeat units follow at residues Gln81 to Leu103, Leu104 to Glu126, Leu127 to Ser149, Leu150 to His172, Ser174 to Leu195, Leu196 to Met219, Arg221 to Ser241, Met242 to Gln266, Lys268 to His287, Leu288 to Leu310, Leu311 to Leu334, Leu336 to Lys356, Ile398 to Ala421, Thr424 to Leu447, Glu449 to Leu470, Leu471 to Leu494, Lys496 to Ile517, Thr519 to Leu540, Met541 to Cys564, and Gln566 to Lys587.

In Mus musculus (Mouse), this protein is Leucine-rich repeat-containing protein 40 (Lrrc40).